The following is a 214-amino-acid chain: Protein get-1 (214 aa).

Topologically, residues 1–4 (MPSL) are lumenal. A helical transmembrane segment spans residues 5-24 (LVVIFVIELFVQLVNTIGAA). At 25 to 110 (TINNLLWRIA…KFDRTLTTVR (86 aa)) the chain is on the cytoplasmic side. Residues 73-107 (KWARLRRQHDKLLEDLEKRKKELDAAKTKFDRTLT) adopt a coiled-coil conformation. Residues 111 to 131 (VVATRGLQWFLPFWYSREPMF) traverse the membrane as a helical segment. Over 132-155 (WLPYGWFPYYVEWFASFPRAPLGS) the chain is Lumenal. Residues 156–172 (VSIVVWQWACTGVIKLV) traverse the membrane as a helical segment. The Cytoplasmic portion of the chain corresponds to 173 to 214 (IETVMAVVGLIVAARQKQQEKQKAKQAVPAAGGGDSKAEEAK). Positions 190–214 (QQEKQKAKQAVPAAGGGDSKAEEAK) are disordered.

Belongs to the WRB/GET1 family. As to quaternary structure, interacts with GET3.

The protein resides in the endoplasmic reticulum membrane. Functionally, required for the post-translational delivery of tail-anchored (TA) proteins to the endoplasmic reticulum. Acts as a membrane receptor for soluble GET3, which recognizes and selectively binds the transmembrane domain of TA proteins in the cytosol. This chain is Protein get-1 (get-1), found in Neurospora crassa (strain ATCC 24698 / 74-OR23-1A / CBS 708.71 / DSM 1257 / FGSC 987).